The chain runs to 78 residues: Putative gastrointestinal growth factor xP1 (78 aa).

Residues 1-23 (MNYKVFCLVAIALIVGSIGSANG) form the signal peptide. Positions 30 to 73 (EQCSVERLARVNCGYSGITPQECTKQGCCFDSTIQDAPWCFYPR) constitute a P-type domain. Disulfide bonds link C32–C58, C42–C57, and C52–C69.

In terms of tissue distribution, stomach mucosa.

The protein resides in the secreted. May act as a growth factor. The protein is Putative gastrointestinal growth factor xP1 (p1) of Xenopus laevis (African clawed frog).